We begin with the raw amino-acid sequence, 228 residues long: uncharacterized protein (228 aa).

The protein belongs to the HAD-like hydrolase superfamily.

It localises to the cytoplasm. The protein localises to the nucleus. This is an uncharacterized protein from Schizosaccharomyces pombe (strain 972 / ATCC 24843) (Fission yeast).